The chain runs to 279 residues: uncharacterized protein (279 aa).

To M.tuberculosis Rv2569c.

This is an uncharacterized protein from Mycobacterium leprae (strain TN).